The sequence spans 102 residues: Large ribosomal subunit protein bL21 (102 aa).

Belongs to the bacterial ribosomal protein bL21 family. In terms of assembly, part of the 50S ribosomal subunit. Contacts protein L20.

Functionally, this protein binds to 23S rRNA in the presence of protein L20. This is Large ribosomal subunit protein bL21 from Lachnospira eligens (strain ATCC 27750 / DSM 3376 / VPI C15-48 / C15-B4) (Eubacterium eligens).